Here is a 193-residue protein sequence, read N- to C-terminus: Rho-related protein racF2 (193 aa).

10 to 17 is a binding site for GTP; it reads GDGAVGKT. The Effector region signature appears at 32-40; that stretch reads YLPTVFDNY. GTP contacts are provided by residues 57-61 and 115-118; these read DTAGQ and TKQD. Cys190 is modified (cysteine methyl ester). Cys190 is lipidated: S-geranylgeranyl cysteine. Residues 191-193 constitute a propeptide, removed in mature form; sequence TIM.

It belongs to the small GTPase superfamily. Rho family.

The protein resides in the cell membrane. This is Rho-related protein racF2 (racF2) from Dictyostelium discoideum (Social amoeba).